The following is a 97-amino-acid chain: Secreted transmembrane peptide 4 (97 aa).

The first 33 residues, 1-33 (MTKNMTKKKMGLMSPNIAAFVLPMLLVLFTISS), serve as a signal peptide directing secretion. The SCOOP motif motif lies at 54-67 (IVFTPPSSSCGGSP). The short motif at 60 to 62 (SSS) is the SxS motif essential for MIK2 binding element. Positions 75–97 (WMPRRPCRRTRPPGTNIPVSQSP) are disordered.

Belongs to the serine rich endogenous peptide (SCOOP) phytocytokine family. Interacts with MIK2 (via extracellular leucine-rich repeat domain); this interaction triggers the formation of complex between MIK2 and the BAK1/SERK3 and SERK4 coreceptors, and subsequent BAK1 activation by phosphorylation. In terms of tissue distribution, mostly expressed in leaves and stems, and, to a lower extent, in roots, siliques, seeds and flowers.

The protein localises to the cell membrane. It is found in the secreted. Its subcellular location is the extracellular space. The protein resides in the apoplast. Brassicaceae-specific phytocytokine (plant endogenous peptide released into the apoplast) perceived by MIK2 in a BAK1/SERK3 and SERK4 coreceptors-dependent manner, that modulates various physiological and antimicrobial processes including growth prevention and reactive oxygen species (ROS) response regulation. Prevents general growth and development. This is Secreted transmembrane peptide 4 from Arabidopsis thaliana (Mouse-ear cress).